Consider the following 283-residue polypeptide: Co-chaperone protein DjlA (283 aa).

The Periplasmic segment spans residues 1–6; it reads MQIFGK. Residues 7–30 form a helical membrane-spanning segment; sequence ILGGFFGFLFGGFFGAALGIFIGH. Residues 31–283 lie on the Cytoplasmic side of the membrane; that stretch reads QFDKAKRMAN…DLIKKEKGIK (253 aa). The span at 188 to 197 shows a compositional bias: gly residues; it reads QGGGFSGHQS. A disordered region spans residues 188-210; sequence QGGGFSGHQSGGSHQQGQWQQAS. The span at 198–210 shows a compositional bias: low complexity; sequence GGSHQQGQWQQAS. One can recognise a J domain in the interval 217-283; sequence DAYNLLGISE…DLIKKEKGIK (67 aa).

Homodimer.

Its subcellular location is the cell inner membrane. Regulatory DnaK co-chaperone. Direct interaction between DnaK and DjlA is needed for the induction of the wcaABCDE operon, involved in the synthesis of a colanic acid polysaccharide capsule, possibly through activation of the RcsB/RcsC phosphotransfer signaling pathway. The colanic acid capsule may help the bacterium survive conditions outside the host. This Aliivibrio fischeri (strain ATCC 700601 / ES114) (Vibrio fischeri) protein is Co-chaperone protein DjlA.